The chain runs to 763 residues: MSVNRCIYLLSRSHIRYRVCASTNLSTVSTLSTTQHSTRRTFDKLSTRHSSSGSSRPLDTSLFIPLPVKTDEDAEGSVGAELTKPLDKNELLKVLNRFYKRKEMQKLASDQGLDARLFHQAFVSFRKYVLEMNSLNADLHIILNDICCGAGHIDDIFPYFMRHAKQIFPMLDCIDDLRKISDLRVPANWYPEARAIQRKIVFHAGPTNSGKTYHAIKRYLEAKSGVYCGPLKLLAHEIYEKSNAAGVPCDLVTGEERIFVDPEGKPSGHIASTIEMCSVTTPYEVAVIDEIQMIKDPARGWAWTRALLGLCAEEIHVCGEAAAVDFITELMFTTGEEVEVHNYKRLTPFSISNHAVESLDNLKPGDCIVCFSKNDIYSISRQIEIRGLECAVIYGSLPPGTKLAQAKKFNDPDDPCKILVATDAIGMGLNLSIRRIIFNSLVKHSLNEKGEKEVDTISTSQALQIAGRAGRFSSVFKEGEVTTMHRDDLPVLKEILGKPVDPIATAGLHPTAEQIEMFAYHLPQATLSNLIDIFVSLSQVDGLYFVCNIDDFKFLADMIQHIPLNLRSRYVFCTAPINKKQPFVCTSFLKFARQFSRDEPLTFNWVCRQVNWPLSPPKNIKDLVHLEAVHDVLDLYLWLSYRFMDMFPDSNQIREIQKELDENIQIGVRNITRLIRAIDSQPTDTESNSSSTVPESETSQRKGRVLRSQNQRKELPRKSSLSSRLLRDGLLTKELLSQLQKEWAREQNEDNSIPVNNGKRKKK.

The transit peptide at 1 to 65 (MSVNRCIYLL…RPLDTSLFIP (65 aa)) directs the protein to the mitochondrion. Residues 39–58 (RRTFDKLSTRHSSSGSSRPL) form a disordered region. The 141-residue stretch at 192–332 (EARAIQRKIV…AVDFITELMF (141 aa)) folds into the Helicase ATP-binding domain. Residue 205–212 (GPTNSGKT) coordinates ATP. Positions 354–519 (HAVESLDNLK…PTAEQIEMFA (166 aa)) constitute a Helicase C-terminal domain. 2 disordered regions span residues 679–721 (DSQP…KSSL) and 742–763 (EWAREQNEDNSIPVNNGKRKKK). A compositionally biased stretch (polar residues) spans 680-697 (SQPTDTESNSSSTVPESE).

This sequence belongs to the helicase family. Requires Mg(2+) as cofactor. Mn(2+) serves as cofactor.

It localises to the nucleus. The protein resides in the mitochondrion matrix. Its subcellular location is the mitochondrion nucleoid. The enzyme catalyses ATP + H2O = ADP + phosphate + H(+). Its function is as follows. Major helicase player in mitochondrial RNA metabolism. Component of the mitochondrial degradosome (mtEXO) complex, that degrades 3' overhang double-stranded RNA with a 3'-to-5' directionality in an ATP-dependent manner. ATPase and ATP-dependent multisubstrate helicase, able to unwind double-stranded (ds) DNA and RNA, and RNA/DNA heteroduplexes in the 5'-to-3' direction. Plays a role in the RNA surveillance system in mitochondria; regulates the stability of mature mRNAs, the removal of aberrantly formed mRNAs and the rapid degradation of non coding processing intermediates. Also implicated in recombination and chromatin maintenance pathways. May protect cells from apoptosis. Associates with mitochondrial DNA. This chain is ATP-dependent RNA helicase SUPV3L1, mitochondrial (supv3l1), found in Danio rerio (Zebrafish).